We begin with the raw amino-acid sequence, 211 residues long: Proteasome subunit beta (211 aa).

Positions 1-8 (MNQTLETG) are cleaved as a propeptide — removed in mature form; by autocatalysis. The active-site Nucleophile is the threonine 9.

It belongs to the peptidase T1B family. As to quaternary structure, the 20S proteasome core is composed of 14 alpha and 14 beta subunits that assemble into four stacked heptameric rings, resulting in a barrel-shaped structure. The two inner rings, each composed of seven catalytic beta subunits, are sandwiched by two outer rings, each composed of seven alpha subunits. The catalytic chamber with the active sites is on the inside of the barrel. Has a gated structure, the ends of the cylinder being occluded by the N-termini of the alpha-subunits. Is capped at one or both ends by the proteasome regulatory ATPase, PAN.

It is found in the cytoplasm. It carries out the reaction Cleavage of peptide bonds with very broad specificity.. With respect to regulation, the formation of the proteasomal ATPase PAN-20S proteasome complex, via the docking of the C-termini of PAN into the intersubunit pockets in the alpha-rings, triggers opening of the gate for substrate entry. Interconversion between the open-gate and close-gate conformations leads to a dynamic regulation of the 20S proteasome proteolysis activity. Functionally, component of the proteasome core, a large protease complex with broad specificity involved in protein degradation. The T.acidophilum proteasome is able to cleave oligopeptides after Tyr, Leu, Phe, and to a lesser extent after Glu and Arg. Thus, displays chymotrypsin-like activity and low level of caspase-like and trypsin-like activities. The protein is Proteasome subunit beta of Thermoplasma acidophilum (strain ATCC 25905 / DSM 1728 / JCM 9062 / NBRC 15155 / AMRC-C165).